The following is a 342-amino-acid chain: Polycomb group RING finger protein 2 (342 aa).

The RING-type zinc finger occupies Cys18–Asp57. Glycyl lysine isopeptide (Lys-Gly) (interchain with G-Cter in SUMO2) cross-links involve residues Lys51 and Lys88. The short motif at Lys81 to Arg95 is the Nuclear localization signal element. Thr237 carries the phosphothreonine; by PKA modification. The disordered stretch occupies residues Thr237–Pro342. Polar residues predominate over residues Thr243–Ala253. Residues Ala263 to Ser318 are compositionally biased toward low complexity. The segment covering Asn319–Ser328 has biased composition (polar residues). Position 334 is a phosphothreonine; by PKA (Thr334).

As to quaternary structure, exists as both a monomer and homodimer. Component of a PRC1-like complex. Interacts with CBX8, RING1 and RNF2. Interacts with CBX7. Interacts with PHC2. Post-translationally, phosphorylated. Homodimer formation is regulated by phosphorylation with only unphosphorylated proteins forming homodimers. As to expression, expressed in embryonic stem cells. Expressed in a variety of tumor cells and in neural tissues.

It is found in the nucleus. Its function is as follows. Transcriptional repressor. Binds specifically to the DNA sequence 5'-GACTNGACT-3'. Has tumor suppressor activity. May play a role in control of cell proliferation and/or neural cell development. Regulates proliferation of early T progenitor cells by maintaining expression of HES1. Also plays a role in antero-posterior specification of the axial skeleton and negative regulation of the self-renewal activity of hematopoietic stem cells. Component of a Polycomb group (PcG) multiprotein PRC1-like complex, a complex class required to maintain the transcriptionally repressive state of many genes, including Hox genes, throughout development. PcG PRC1 complex acts via chromatin remodeling and modification of histones; it mediates monoubiquitination of histone H2A 'Lys-119', rendering chromatin heritably changed in its expressibility. Within the PRC1-like complex, regulates RNF2 ubiquitin ligase activity. This chain is Polycomb group RING finger protein 2 (Pcgf2), found in Mus musculus (Mouse).